The primary structure comprises 984 residues: Valine--tRNA ligase (984 aa).

Residues 65–75 (PNVTGSLHMGH) carry the 'HIGH' region motif. A 'KMSKS' region motif is present at residues 579–583 (KMSKS). Residue Lys-582 participates in ATP binding. The stretch at 954–984 (VEVVDAEKAKLAELEGQLTAMTAQMEELKNL) forms a coiled coil.

It belongs to the class-I aminoacyl-tRNA synthetase family. ValS type 1 subfamily. As to quaternary structure, monomer.

It is found in the cytoplasm. The enzyme catalyses tRNA(Val) + L-valine + ATP = L-valyl-tRNA(Val) + AMP + diphosphate. In terms of biological role, catalyzes the attachment of valine to tRNA(Val). As ValRS can inadvertently accommodate and process structurally similar amino acids such as threonine, to avoid such errors, it has a 'posttransfer' editing activity that hydrolyzes mischarged Thr-tRNA(Val) in a tRNA-dependent manner. The sequence is that of Valine--tRNA ligase from Psychrobacter arcticus (strain DSM 17307 / VKM B-2377 / 273-4).